Reading from the N-terminus, the 657-residue chain is Cyclic-di-AMP phosphodiesterase PdeA (657 aa).

2 consecutive transmembrane segments (helical) span residues 13–35 (PLYGLIAATIILSVITFFFSWWL) and 37–53 (ALVVVGGIILTVAMFYF). The tract at residues 74 to 137 (RSEEEALVEM…ITGNDEKGIM (64 aa)) is PAS-like. The region spanning 175 to 303 (NKSVFAVIFL…GGDQVVIKQP (129 aa)) is the GGDEF domain. The tract at residues 342–498 (VFVMGHRYPD…IEATALLSGI (157 aa)) is DHH. Histidine 347, aspartate 351, aspartate 353, aspartate 422, histidine 446, and aspartate 501 together coordinate Mn(2+). The segment at 592–645 (VITLRPDKLIGISARSLGQINVQVIMEKLGGGGHLSNAATQLKDVTIAEAEKQL) is DHHA1.

It belongs to the GdpP/PdeA phosphodiesterase family. It depends on heme b as a cofactor. Mn(2+) serves as cofactor.

It localises to the cell membrane. It carries out the reaction 3',3'-c-di-AMP + H2O = 5'-O-phosphonoadenylyl-(3'-&gt;5')-adenosine + H(+). In terms of biological role, has phosphodiesterase (PDE) activity against cyclic-di-AMP (c-di-AMP). Overexpression decreases export of c-di-AMP, leads to slightly increased susceptibility to the antibiotic cefuroxime and somewhat slower growth in macrophages. There are at least 2 PDEs for c-di-AMP in this bacteria (this one and pgpH); this may be the major PDE for intracellular growth in host macrophages. During host infection c-di-AMP is secreted into the host cytoplasm which leads to interferon-beta production and secretion by the host. c-di-AMP is a second messenger that mediates growth, cell wall stability and virulence. May monitor cellular heme or NO levels. In Listeria monocytogenes serotype 1/2a (strain 10403S), this protein is Cyclic-di-AMP phosphodiesterase PdeA.